The primary structure comprises 55 residues: Spermatid nuclear transition protein 1 (55 aa).

The span at 1-42 (MSTSRKLKSHGMRRSKSRSPHKGVKRGGSKRKYRKGNLKSRK) shows a compositional bias: basic residues. A disordered region spans residues 1 to 55 (MSTSRKLKSHGMRRSKSRSPHKGVKRGGSKRKYRKGNLKSRKRGDDANRNYRSHL). A phosphoserine mark is found at S9 and S40.

This sequence belongs to the nuclear transition protein 1 family. Expressed by spermatids (at protein level).

The protein resides in the nucleus. Its subcellular location is the chromosome. In terms of biological role, plays a key role in the replacement of histones to protamine in the elongating spermatids of mammals. In condensing spermatids, loaded onto the nucleosomes, where it promotes the recruitment and processing of protamines, which are responsible for histone eviction. This Homo sapiens (Human) protein is Spermatid nuclear transition protein 1 (TNP1).